The following is a 315-amino-acid chain: Zinc transport protein ZntB (315 aa).

At Met-1–Tyr-250 the chain is on the cytoplasmic side. Residues Leu-251–Ile-271 form a helical membrane-spanning segment. Residues Asn-272–Ser-282 lie on the Periplasmic side of the membrane. Residues Met-283 to Phe-303 traverse the membrane as a helical segment. Topologically, residues Lys-304–Glu-315 are cytoplasmic.

The protein belongs to the CorA metal ion transporter (MIT) (TC 1.A.35) family. Homopentamer. Can assemble pentamers in the absence of the transmembrane regions.

It is found in the cell inner membrane. The catalysed reaction is Zn(2+)(out) + H(+)(out) = Zn(2+)(in) + H(+)(in). Functionally, zinc transporter. Acts as a Zn(2+):proton symporter, which likely mediates zinc ion uptake. The chain is Zinc transport protein ZntB from Vibrio parahaemolyticus serotype O3:K6 (strain RIMD 2210633).